The chain runs to 59 residues: Large ribosomal subunit protein bL32 (59 aa).

The segment at 1-59 is disordered; the sequence is MAVQQNKKSPSKRGMHRAHDFLTAPVIAIEPSTGEAHRRHHISPNGFYRGRKVVKGKDE. The span at 49–59 shows a compositional bias: basic residues; sequence RGRKVVKGKDE.

The protein belongs to the bacterial ribosomal protein bL32 family.

This Laribacter hongkongensis (strain HLHK9) protein is Large ribosomal subunit protein bL32.